We begin with the raw amino-acid sequence, 812 residues long: Phenylalanine--tRNA ligase beta subunit (812 aa).

The region spanning S39–A155 is the tRNA-binding domain. The B5 domain maps to P405 to M480. Mg(2+)-binding residues include D458, D464, E467, and E468. Residues P718–R811 form the FDX-ACB domain.

It belongs to the phenylalanyl-tRNA synthetase beta subunit family. Type 1 subfamily. As to quaternary structure, tetramer of two alpha and two beta subunits. Mg(2+) is required as a cofactor.

The protein resides in the cytoplasm. The catalysed reaction is tRNA(Phe) + L-phenylalanine + ATP = L-phenylalanyl-tRNA(Phe) + AMP + diphosphate + H(+). The sequence is that of Phenylalanine--tRNA ligase beta subunit from Nitrobacter winogradskyi (strain ATCC 25391 / DSM 10237 / CIP 104748 / NCIMB 11846 / Nb-255).